A 681-amino-acid chain; its full sequence is Proton channel OTOP3 (681 aa).

Over residues M1 to G25 the composition is skewed to basic and acidic residues. Residues M1–K26 are disordered. Over M1–R112 the chain is Cytoplasmic. The chain crosses the membrane as a helical span at residues L113–V133. Topologically, residues A134–R143 are extracellular. Residues D144–F166 traverse the membrane as a helical segment. Over I167–A182 the chain is Cytoplasmic. Residues M183 to I204 form a helical membrane-spanning segment. The Extracellular portion of the chain corresponds to G205 to L216. A helical transmembrane segment spans residues M217–C240. Topologically, residues K241–H248 are cytoplasmic. A helical transmembrane segment spans residues S249 to I271. At D272–P317 the chain is on the extracellular side. The chain crosses the membrane as a helical span at residues F318–W334. Topologically, residues K335–I358 are cytoplasmic. Residues Y359 to Y378 form a helical membrane-spanning segment. The Extracellular segment spans residues Q379–Y392. The chain crosses the membrane as a helical span at residues H393–I415. The Cytoplasmic portion of the chain corresponds to A416–K507. The chain crosses the membrane as a helical span at residues L508–I529. Residues A530 to L540 lie on the Extracellular side of the membrane. Residues S541–I563 form a helical membrane-spanning segment. Over E564–E614 the chain is Cytoplasmic. A helical transmembrane segment spans residues M615–F632. The Extracellular portion of the chain corresponds to G633–I651. A helical transmembrane segment spans residues W652–L674. The Cytoplasmic portion of the chain corresponds to L675–A681.

The protein belongs to the otopetrin family. As to quaternary structure, homodimer.

The protein localises to the cell membrane. The enzyme catalyses H(+)(in) = H(+)(out). Its activity is regulated as follows. pH regulates the proton channel activity from both sides of the plasma membrane. Low pH activates the channel from the extracellular side but inactivates the channel on the intracellular side. Zn(2+) and Ca(2+) can partially block the channel. Its function is as follows. Proton-selective channel gated by extracellular protons. The sequence is that of Proton channel OTOP3 (otop3) from Xenopus tropicalis (Western clawed frog).